A 424-amino-acid chain; its full sequence is uncharacterized protein (424 aa).

Lysine 259 is modified (N6-(pyridoxal phosphate)lysine).

It belongs to the class-III pyridoxal-phosphate-dependent aminotransferase family. The cofactor is pyridoxal 5'-phosphate.

This is an uncharacterized protein from Archaeoglobus fulgidus (strain ATCC 49558 / DSM 4304 / JCM 9628 / NBRC 100126 / VC-16).